A 285-amino-acid polypeptide reads, in one-letter code: Small ribosomal subunit protein mS23 (285 aa).

The protein belongs to the mitochondrion-specific ribosomal protein mS23 family. Component of the mitochondrial small ribosomal subunit.

The protein localises to the mitochondrion. The chain is Small ribosomal subunit protein mS23 (RSM25) from Debaryomyces hansenii (strain ATCC 36239 / CBS 767 / BCRC 21394 / JCM 1990 / NBRC 0083 / IGC 2968) (Yeast).